The primary structure comprises 36 residues: Potassium channel toxin alpha-KTx 16.5 (36 aa).

Disulfide bonds link cysteine 7–cysteine 28, cysteine 13–cysteine 33, and cysteine 17–cysteine 35. The segment at 26-33 (GKCQNKQC) is interaction with Ca(2+)-activated K(+) channels.

Belongs to the short scorpion toxin superfamily. Potassium channel inhibitor family. Alpha-KTx 16 subfamily. In terms of tissue distribution, expressed by the venom gland.

It localises to the secreted. In terms of biological role, augments responses to direct muscle stimulation probably by blocking calcium-activated potassium channels. The polypeptide is Potassium channel toxin alpha-KTx 16.5 (Leiurus hebraeus (Hebrew deathstalker scorpion)).